We begin with the raw amino-acid sequence, 440 residues long: Xaa-Pro dipeptidase (440 aa).

Mn(2+)-binding residues include Asp246, Asp257, His337, Glu382, and Glu421.

This sequence belongs to the peptidase M24B family. Bacterial-type prolidase subfamily. The cofactor is Mn(2+).

It carries out the reaction Xaa-L-Pro dipeptide + H2O = an L-alpha-amino acid + L-proline. Functionally, splits dipeptides with a prolyl residue in the C-terminal position. The polypeptide is Xaa-Pro dipeptidase (Aeromonas hydrophila subsp. hydrophila (strain ATCC 7966 / DSM 30187 / BCRC 13018 / CCUG 14551 / JCM 1027 / KCTC 2358 / NCIMB 9240 / NCTC 8049)).